A 583-amino-acid polypeptide reads, in one-letter code: Cell division protein FtsZ (583 aa).

GTP contacts are provided by residues 24–28 (GGGGN), 111–113 (GTG), glutamate 142, arginine 146, and aspartate 190. 2 disordered regions span residues 391–425 (HQQP…VQQA) and 510–583 (TNSL…RQSN). Over residues 412–425 (APAALRPAQPVQQA) the composition is skewed to low complexity.

This sequence belongs to the FtsZ family. In terms of assembly, homodimer. Polymerizes to form a dynamic ring structure in a strictly GTP-dependent manner. Interacts directly with several other division proteins.

The protein localises to the cytoplasm. Essential cell division protein that forms a contractile ring structure (Z ring) at the future cell division site. The regulation of the ring assembly controls the timing and the location of cell division. One of the functions of the FtsZ ring is to recruit other cell division proteins to the septum to produce a new cell wall between the dividing cells. Binds GTP and shows GTPase activity. The protein is Cell division protein FtsZ of Rhizobium radiobacter (Agrobacterium tumefaciens).